The following is a 396-amino-acid chain: Inhibitory POU protein (396 aa).

A POU-IV box motif is present at residues 86 to 95; that stretch reads RAEALAAVDI. The POU-specific domain maps to 222–299; sequence DTDTDPRELE…ILQAWLEEAE (78 aa). The disordered stretch occupies residues 302 to 328; the sequence is AKNKRRDPDAPSVLPAGEKKRKRTSIA. The homeobox; atypical DNA-binding region spans 320–377; sequence KKRKRTSIAAPEKRSLEAYFAVQPRPSGEKIAAIAEKLDLKKNVVRVWFCNQRQKQKR.

It belongs to the POU transcription factor family. Class-4 subfamily. Coexpressed with vvl in overlapping subsets of neurons in the embryonic central nervous system. Expressed in olfactory neurons.

Its subcellular location is the nucleus. Functionally, modulates gene transcription; simultaneously generates both a specific activator and an inhibitor of gene transcription, capable of modulating two distinct regulatory programs during neural development. Has a role in olfactory behavior. The sequence is that of Inhibitory POU protein (acj6) from Drosophila melanogaster (Fruit fly).